The sequence spans 292 residues: 4-hydroxy-tetrahydrodipicolinate synthase (292 aa).

Thr-45 is a binding site for pyruvate. The active-site Proton donor/acceptor is the Tyr-133. Lys-161 serves as the catalytic Schiff-base intermediate with substrate. Ile-203 is a binding site for pyruvate.

The protein belongs to the DapA family. Homotetramer; dimer of dimers.

It is found in the cytoplasm. The enzyme catalyses L-aspartate 4-semialdehyde + pyruvate = (2S,4S)-4-hydroxy-2,3,4,5-tetrahydrodipicolinate + H2O + H(+). It functions in the pathway amino-acid biosynthesis; L-lysine biosynthesis via DAP pathway; (S)-tetrahydrodipicolinate from L-aspartate: step 3/4. In terms of biological role, catalyzes the condensation of (S)-aspartate-beta-semialdehyde [(S)-ASA] and pyruvate to 4-hydroxy-tetrahydrodipicolinate (HTPA). The protein is 4-hydroxy-tetrahydrodipicolinate synthase of Azoarcus sp. (strain BH72).